The primary structure comprises 426 residues: Histidine--tRNA ligase (426 aa).

This sequence belongs to the class-II aminoacyl-tRNA synthetase family. Homodimer.

It localises to the cytoplasm. The catalysed reaction is tRNA(His) + L-histidine + ATP = L-histidyl-tRNA(His) + AMP + diphosphate + H(+). This chain is Histidine--tRNA ligase, found in Prochlorococcus marinus (strain AS9601).